The primary structure comprises 825 residues: Probable phosphoketolase (825 aa).

Belongs to the XFP family. Requires thiamine diphosphate as cofactor.

The sequence is that of Probable phosphoketolase from Schizosaccharomyces pombe (strain 972 / ATCC 24843) (Fission yeast).